The sequence spans 130 residues: Large ribosomal subunit protein bL12 (130 aa).

The protein belongs to the bacterial ribosomal protein bL12 family. In terms of assembly, homodimer. Part of the ribosomal stalk of the 50S ribosomal subunit. Forms a multimeric L10(L12)X complex, where L10 forms an elongated spine to which 2 to 4 L12 dimers bind in a sequential fashion. Binds GTP-bound translation factors.

Its function is as follows. Forms part of the ribosomal stalk which helps the ribosome interact with GTP-bound translation factors. Is thus essential for accurate translation. This Yersinia pestis bv. Antiqua (strain Angola) protein is Large ribosomal subunit protein bL12.